A 138-amino-acid chain; its full sequence is Thyrotropin subunit beta (138 aa).

The signal sequence occupies residues 1 to 20 (MTAIFLMSVLFGLACGQAMS). 6 disulfide bridges follow: Cys22–Cys72, Cys36–Cys87, Cys39–Cys125, Cys47–Cys103, Cys51–Cys105, and Cys108–Cys115. N-linked (GlcNAc...) asparagine glycosylation occurs at Asn43. A propeptide spanning residues 133–138 (VVGLSI) is cleaved from the precursor.

Belongs to the glycoprotein hormones subunit beta family. In terms of assembly, heterodimer of a common alpha chain and a unique beta chain which confers biological specificity to thyrotropin, lutropin, follitropin and gonadotropin.

The protein resides in the secreted. Functionally, indispensable for the control of thyroid structure and metabolism. This chain is Thyrotropin subunit beta (TSHB), found in Lama glama (Llama).